A 557-amino-acid chain; its full sequence is TNF receptor-associated factor 5 (557 aa).

The segment at 45 to 85 (CAFCHSVLHNPHQTGCGHRFCQHCILSLRELNTVPICPVDK) adopts an RING-type zinc-finger fold. 2 consecutive TRAF-type zinc fingers follow at residues 127–181 (DHLQ…INLQ) and 182–239 (NHEE…RNLQ). Residues 237–342 (NLQQHEHSAL…VNQQQNKFDL (106 aa)) are a coiled coil. Lys318 is covalently cross-linked (Glycyl lysine isopeptide (Lys-Gly) (interchain with G-Cter in ubiquitin)). An interaction with EIF2AK2/PKR region spans residues 345-557 (LMEAVDTVKQ…AVDLTDLEDL (213 aa)). An MATH domain is found at 403–549 (NGKLIWKVTD…DDTLFLKVAV (147 aa)).

This sequence belongs to the TNF receptor-associated factor family. A subfamily. As to quaternary structure, homotrimer. Heteromer with TRAF3. Associates with TNFRSF5/CD40 through interaction with TRAF3. Associates with LTBR/TNFRSF3, TNFRSF4, TNFRSF8/CD30, TNFRSF11A/RANK, TNFRSF13B/TACI, TNFRSF14, TNFRSF17, TNFRSF19/TROY, RIPK2, MAP3K14, MAP3K5, and TRAF and TNF receptor associated protein TDP2. Interacts (via C-terminus) with EIF2AK2/PKR (via the kinase catalytic domain). Ubiquitinated at Lys-318 by the SCF(FBXL2) complex, leading to its degradation by the proteasome. As to expression, expressed in spleen, thymus, prostate, testis, ovary, small intestine, colon, and peripheral blood.

It localises to the cytoplasm. Its subcellular location is the cytosol. In terms of biological role, adapter protein and signal transducer that links members of the tumor necrosis factor receptor family to different signaling pathways by association with the receptor cytoplasmic domain and kinases. Mediates activation of NF-kappa-B and probably JNK. Seems to be involved in apoptosis. Plays a role in mediating activation of NF-kappa-B by EIF2AK2/PKR. The chain is TNF receptor-associated factor 5 (TRAF5) from Homo sapiens (Human).